Here is a 236-residue protein sequence, read N- to C-terminus: Apoptosis regulator Bcl-2 (236 aa).

A BH4 motif is present at residues 10 to 30 (DNREIVMKYIHYKLSQRGYEW). Thr-69 is subject to Phosphothreonine; by MAPK8. Ser-70 carries the phosphoserine; by MAPK8 and PKC modification. A Phosphoserine; by MAPK8 modification is found at Ser-84. The BH3 motif lies at 90-104 (VHLTLRRAGDDFSRR). The BH1 motif lies at 133-152 (ELFRDGVNWGRIVAFFEFGG). The short motif at 184-199 (TWIQDNGGWDAFVELY) is the BH2 element. The chain crosses the membrane as a helical span at residues 209–230 (FSWLSLKALLSLALVGACITLG).

Belongs to the Bcl-2 family. In terms of assembly, forms homodimers, and heterodimers with BAX, BAD, BAK and Bcl-X(L). Heterodimerization with BAX requires intact BH1 and BH2 motifs, and is necessary for anti-apoptotic activity. Component of the complex, at least composed of LRPPRC, BECN1 and BCL2; the interactions prevent BECN1 from forming an autophagy-inducing complex with PIK3C3. Interacts with EI24. Also interacts with APAF1, BBC3, BCL2L1, BNIPL, MRPL41 and TP53BP2. Binding to FKBP8 seems to target BCL2 to the mitochondria and probably interferes with the binding of BCL2 to its targets. Interacts with BAG1 in an ATP-dependent manner. Interacts with RAF1 (the 'Ser-338' and 'Ser-339' phosphorylated form). Interacts (via the BH4 domain) with EGLN3; the interaction prevents the formation of the BAX-BCL2 complex and inhibits the anti-apoptotic activity of BCL2. Interacts with G0S2; this interaction also prevents the formation of the anti-apoptotic BAX-BCL2 complex. Interacts with RTL10/BOP. Interacts with the SCF(FBXO10) complex. Interacts (via the loop between motifs BH4 and BH3) with NLRP1 (via LRR repeats), but not with NLRP2, NLRP3, NLRP4, PYCARD, nor MEFV. Interacts with GIMAP3/IAN4, GIMAP4/IAN1 and GIMAP5/IAN5. Interacts with BCAP31. Interacts with IRF3; the interaction is inhibited by Sendai virus infection. Interacts with BECN1; thereby inhibiting autophagy in non-starvation conditions. Interacts with AMBRA1; thereby inhibiting autophagy. Phosphorylation/dephosphorylation on Ser-70 regulates anti-apoptotic activity. Growth factor-stimulated phosphorylation on Ser-70 by PKC is required for the anti-apoptosis activity and occurs during the G2/M phase of the cell cycle. In the absence of growth factors, BCL2 appears to be phosphorylated by other protein kinases such as ERKs and stress-activated kinases. Phosphorylated by MAPK8/JNK1 at Thr-69, Ser-70 and Ser-84, which stimulates starvation-induced autophagy. Dephosphorylated by protein phosphatase 2A (PP2A). In terms of processing, proteolytically cleaved by caspases during apoptosis. The cleaved protein, lacking the BH4 motif, has pro-apoptotic activity, causes the release of cytochrome c into the cytosol promoting further caspase activity. Post-translationally, monoubiquitinated by PRKN, leading to an increase in its stability. Ubiquitinated by SCF(FBXO10), leading to its degradation by the proteasome.

The protein resides in the mitochondrion outer membrane. It localises to the nucleus membrane. The protein localises to the endoplasmic reticulum membrane. Its subcellular location is the cytoplasm. Suppresses apoptosis in a variety of cell systems including factor-dependent lymphohematopoietic and neural cells. Regulates cell death by controlling the mitochondrial membrane permeability. Appears to function in a feedback loop system with caspases. Inhibits caspase activity either by preventing the release of cytochrome c from the mitochondria and/or by binding to the apoptosis-activating factor (APAF-1). Also acts as an inhibitor of autophagy: interacts with BECN1 and AMBRA1 during non-starvation conditions and inhibits their autophagy function. May attenuate inflammation by impairing NLRP1-inflammasome activation, hence CASP1 activation and IL1B release. This Canis lupus familiaris (Dog) protein is Apoptosis regulator Bcl-2 (BCL2).